The following is a 412-amino-acid chain: Probable beta-1,4-xylosyltransferase IRX10 (412 aa).

Residues 1 to 21 traverse the membrane as a helical; Signal-anchor for type II membrane protein segment; the sequence is MKIHSCLSAILLFLFFSASSA. Over 22–412 the chain is Lumenal; sequence KQNVRTERIS…AGPVADLKPW (391 aa). N-linked (GlcNAc...) asparagine glycosylation is found at Asn-139 and Asn-400.

This sequence belongs to the glycosyltransferase 47 family. As to expression, limited to xylem cells. Expressed in the root tip, xylem cells of roots, and in the vasculature of roots, cotyledons and leaves.

Its subcellular location is the golgi apparatus membrane. Involved in the synthesis of the hemicellulose glucuronoxylan, a major component of secondary cell walls. Probably involved in the elongation of glucuronoxylan xylosyl backbone, especially in the formation of GlcUA side chain of xylans. The sequence is that of Probable beta-1,4-xylosyltransferase IRX10 (IRX10) from Arabidopsis thaliana (Mouse-ear cress).